The primary structure comprises 191 residues: Fe/S biogenesis protein NfuA (191 aa).

[4Fe-4S] cluster-binding residues include Cys149 and Cys152.

The protein belongs to the NfuA family. Homodimer. [4Fe-4S] cluster is required as a cofactor.

Involved in iron-sulfur cluster biogenesis. Binds a 4Fe-4S cluster, can transfer this cluster to apoproteins, and thereby intervenes in the maturation of Fe/S proteins. Could also act as a scaffold/chaperone for damaged Fe/S proteins. The polypeptide is Fe/S biogenesis protein NfuA (Photorhabdus laumondii subsp. laumondii (strain DSM 15139 / CIP 105565 / TT01) (Photorhabdus luminescens subsp. laumondii)).